The following is a 215-amino-acid chain: Adenylate kinase (215 aa).

10–15 (GAGKGT) provides a ligand contact to ATP. The segment at 30–59 (STGDMFRKAIKDETDLGKEAKSYMDRGELV) is NMP. Residues Thr31, Arg36, 57–59 (ELV), 85–88 (GFPR), and Gln92 contribute to the AMP site. Residues 126–163 (GRRICEKCGTTYHLVFNPPKVDGICDIDGGKLYQREDD) form an LID region. Position 127 (Arg127) interacts with ATP. The Zn(2+) site is built by Cys130 and Cys133. 136 to 137 (TY) contributes to the ATP binding site. 2 residues coordinate Zn(2+): Cys150 and Asp153. Residues Arg160 and Arg171 each coordinate AMP. Residue Lys199 participates in ATP binding.

It belongs to the adenylate kinase family. In terms of assembly, monomer.

It is found in the cytoplasm. It catalyses the reaction AMP + ATP = 2 ADP. It functions in the pathway purine metabolism; AMP biosynthesis via salvage pathway; AMP from ADP: step 1/1. Its function is as follows. Catalyzes the reversible transfer of the terminal phosphate group between ATP and AMP. Plays an important role in cellular energy homeostasis and in adenine nucleotide metabolism. In Staphylococcus epidermidis (strain ATCC 35984 / DSM 28319 / BCRC 17069 / CCUG 31568 / BM 3577 / RP62A), this protein is Adenylate kinase.